A 234-amino-acid polypeptide reads, in one-letter code: Putative methyltransferase-like protein 15P1 (234 aa).

S-adenosyl-L-methionine contacts are provided by residues 100–102 (GGH), aspartate 119, phenylalanine 146, aspartate 169, and glutamine 176.

It belongs to the methyltransferase superfamily. RsmH family.

Probable S-adenosyl-L-methionine-dependent methyltransferase. The sequence is that of Putative methyltransferase-like protein 15P1 (METTL15P1) from Homo sapiens (Human).